The chain runs to 122 residues: Large ribosomal subunit protein uL14 (122 aa).

The protein belongs to the universal ribosomal protein uL14 family. In terms of assembly, part of the 50S ribosomal subunit. Forms a cluster with proteins L3 and L19. In the 70S ribosome, L14 and L19 interact and together make contacts with the 16S rRNA in bridges B5 and B8.

Functionally, binds to 23S rRNA. Forms part of two intersubunit bridges in the 70S ribosome. The polypeptide is Large ribosomal subunit protein uL14 (Ligilactobacillus salivarius (strain UCC118) (Lactobacillus salivarius)).